Reading from the N-terminus, the 59-residue chain is Protein B3 (59 aa).

This is Protein B3 (B3) from Homo sapiens (Human).